The chain runs to 262 residues: RRGSPQGGSHTTPHPDRLTPSPDDTYDDDTNHPNGRNNSIEIVPQLPPDRPLIELGVATLRKNFMEASCTVETNSGLAIFWKIGKPSVDAFNRGTTHTRLMRNGVPVYALVSTLRVPWLNVIPLTKITCAACPTNLVAGDGEDLNSCTTKSTTIPCPGQQRTHIFFSAKGHRAVCITSELVSQPTITWSVGSDRLRNDGFSQTWYGIQPGVCGILRSRFAFTAPPGALDQHQRTISVRSAHRTQRRAITKCYPTPTQLPTSL.

Residues 1–45 are disordered; the sequence is RRGSPQGGSHTTPHPDRLTPSPDDTYDDDTNHPNGRNNSIEIVPQ.

Its subcellular location is the virion membrane. In terms of biological role, virulence factor. The chain is Glycoprotein gp2 from Equus caballus (Horse).